A 185-amino-acid polypeptide reads, in one-letter code: Ribosome-recycling factor (185 aa).

Residues 131–155 are compositionally biased toward basic and acidic residues; that stretch reads DRKNANDKIKKSEKDKEITADESKS. Positions 131-156 are disordered; sequence DRKNANDKIKKSEKDKEITADESKSA.

The protein belongs to the RRF family.

Its subcellular location is the cytoplasm. Its function is as follows. Responsible for the release of ribosomes from messenger RNA at the termination of protein biosynthesis. May increase the efficiency of translation by recycling ribosomes from one round of translation to another. In Sulfurimonas denitrificans (strain ATCC 33889 / DSM 1251) (Thiomicrospira denitrificans (strain ATCC 33889 / DSM 1251)), this protein is Ribosome-recycling factor.